We begin with the raw amino-acid sequence, 387 residues long: Eukaryotic translation initiation factor 3 subunit M (387 aa).

The region spanning 181-340 (LSSKVMIELL…RKVHISSTMH (160 aa)) is the PCI domain.

The protein belongs to the eIF-3 subunit M family. Component of the eukaryotic translation initiation factor 3 (eIF-3) complex. The eIF-3 complex interacts with pix.

The protein localises to the cytoplasm. It localises to the golgi apparatus. Its function is as follows. Component of the eukaryotic translation initiation factor 3 (eIF-3) complex, which is involved in protein synthesis of a specialized repertoire of mRNAs and, together with other initiation factors, stimulates binding of mRNA and methionyl-tRNAi to the 40S ribosome. The eIF-3 complex specifically targets and initiates translation of a subset of mRNAs involved in cell proliferation. The chain is Eukaryotic translation initiation factor 3 subunit M from Drosophila ananassae (Fruit fly).